The chain runs to 430 residues: Serine--tRNA ligase (430 aa).

237 to 239 is an L-serine binding site; sequence TAE. 268 to 270 contributes to the ATP binding site; the sequence is RSE. Glu-291 is an L-serine binding site. 355 to 358 contributes to the ATP binding site; sequence EISS. Ser-391 is an L-serine binding site.

The protein belongs to the class-II aminoacyl-tRNA synthetase family. Type-1 seryl-tRNA synthetase subfamily. As to quaternary structure, homodimer. The tRNA molecule binds across the dimer.

The protein localises to the cytoplasm. It catalyses the reaction tRNA(Ser) + L-serine + ATP = L-seryl-tRNA(Ser) + AMP + diphosphate + H(+). It carries out the reaction tRNA(Sec) + L-serine + ATP = L-seryl-tRNA(Sec) + AMP + diphosphate + H(+). It functions in the pathway aminoacyl-tRNA biosynthesis; selenocysteinyl-tRNA(Sec) biosynthesis; L-seryl-tRNA(Sec) from L-serine and tRNA(Sec): step 1/1. In terms of biological role, catalyzes the attachment of serine to tRNA(Ser). Is also able to aminoacylate tRNA(Sec) with serine, to form the misacylated tRNA L-seryl-tRNA(Sec), which will be further converted into selenocysteinyl-tRNA(Sec). This chain is Serine--tRNA ligase, found in Escherichia fergusonii (strain ATCC 35469 / DSM 13698 / CCUG 18766 / IAM 14443 / JCM 21226 / LMG 7866 / NBRC 102419 / NCTC 12128 / CDC 0568-73).